A 339-amino-acid polypeptide reads, in one-letter code: Probable scoulerine-9-O-methyltransferase OMT3B (339 aa).

Residue Met-161 participates in S-adenosyl-L-methionine binding. Asp-164 lines the substrate pocket. S-adenosyl-L-methionine-binding positions include Thr-165, Gly-191, Asp-214, 228–229, and Lys-242; that span reads DV. Residue 243-247 coordinates substrate; the sequence is SILHE. The active-site Proton acceptor is the His-246.

It belongs to the class I-like SAM-binding methyltransferase superfamily. Cation-independent O-methyltransferase family. COMT subfamily.

The catalysed reaction is (S)-scoulerine + S-adenosyl-L-methionine = (S)-tetrahydrocolumbamine + S-adenosyl-L-homocysteine + H(+). The protein operates within alkaloid biosynthesis. Functionally, methyltransferase involved in the biosynthesis of the benzylisoquinoline alkaloid noscapine. Catalyzes the conversion of (S)-scoulerine to (S)-tetrahydrocolumbamine. In Papaver somniferum (Opium poppy), this protein is Probable scoulerine-9-O-methyltransferase OMT3B.